The following is a 668-amino-acid chain: mRNA cap guanine-N(7) methyltransferase (668 aa).

Positions 1–19 (MYDPARDSWEERDGDEARS) are enriched in basic and acidic residues. The interval 1-281 (MYDPARDSWE…RAQVEEAMRA (281 aa)) is disordered. Polar residues predominate over residues 44 to 65 (GENNNTTDLQQHPDPSSKTTAS). Low complexity predominate over residues 73–88 (SQPAQPTTQTPPSVST). Over residues 100-129 (KASNPQSLTSTAQNQLNKSNTTMENTSGSA) the composition is skewed to polar residues. Residues 133-142 (PRADPSDKPN) show a composition bias toward basic and acidic residues. Residues 148–157 (ASPTDQNGSQ) show a composition bias toward polar residues. Over residues 257-279 (LVDRETLRRRQEERERAQVEEAM) the composition is skewed to basic and acidic residues. Residues 310 to 668 (SKIKGLRSFN…FYHAFCFYKV (359 aa)) form the mRNA cap 0 methyltransferase domain. 319–320 (NN) is a binding site for mRNA. S-adenosyl-L-methionine is bound by residues Lys323, Gly366, Asp390, Asp428, 471–473 (MFT), and Tyr476. The disordered stretch occupies residues 524 to 547 (ARQAQAKKEKSDEAPEDGEVEEDD). Acidic residues predominate over residues 537-547 (APEDGEVEEDD).

The protein belongs to the class I-like SAM-binding methyltransferase superfamily. mRNA cap 0 methyltransferase family.

The protein resides in the nucleus. The enzyme catalyses a 5'-end (5'-triphosphoguanosine)-ribonucleoside in mRNA + S-adenosyl-L-methionine = a 5'-end (N(7)-methyl 5'-triphosphoguanosine)-ribonucleoside in mRNA + S-adenosyl-L-homocysteine. Functionally, responsible for methylating the 5'-cap structure of mRNAs. In Aspergillus fumigatus (strain ATCC MYA-4609 / CBS 101355 / FGSC A1100 / Af293) (Neosartorya fumigata), this protein is mRNA cap guanine-N(7) methyltransferase (abd1).